The following is a 97-amino-acid chain: MSGISSKELEELKINGWIVLENGKKIKKEFRFKDFKQSVDFLKDIQPSADALDHHPDVCVYYNRVVVELTTHDVGGLTDLDYKLAIKLDELYKMKTS.

It belongs to the pterin-4-alpha-carbinolamine dehydratase family.

The enzyme catalyses (4aS,6R)-4a-hydroxy-L-erythro-5,6,7,8-tetrahydrobiopterin = (6R)-L-erythro-6,7-dihydrobiopterin + H2O. The chain is Putative pterin-4-alpha-carbinolamine dehydratase from Saccharolobus solfataricus (strain ATCC 35092 / DSM 1617 / JCM 11322 / P2) (Sulfolobus solfataricus).